A 213-amino-acid polypeptide reads, in one-letter code: Protein-L-isoaspartate O-methyltransferase (213 aa).

S61 is an active-site residue.

It belongs to the methyltransferase superfamily. L-isoaspartyl/D-aspartyl protein methyltransferase family.

It is found in the cytoplasm. It carries out the reaction [protein]-L-isoaspartate + S-adenosyl-L-methionine = [protein]-L-isoaspartate alpha-methyl ester + S-adenosyl-L-homocysteine. In terms of biological role, catalyzes the methyl esterification of L-isoaspartyl residues in peptides and proteins that result from spontaneous decomposition of normal L-aspartyl and L-asparaginyl residues. It plays a role in the repair and/or degradation of damaged proteins. The protein is Protein-L-isoaspartate O-methyltransferase of Petrotoga mobilis (strain DSM 10674 / SJ95).